Consider the following 106-residue polypeptide: Cytochrome c (106 aa).

Heme c is bound by residues cysteine 17, cysteine 20, and histidine 21. Lysine 75 carries the post-translational modification N6,N6,N6-trimethyllysine. Methionine 83 serves as a coordination point for heme c.

This sequence belongs to the cytochrome c family. Binds 1 heme c group covalently per subunit.

It is found in the mitochondrion intermembrane space. In terms of biological role, electron carrier protein. The oxidized form of the cytochrome c heme group can accept an electron from the heme group of the cytochrome c1 subunit of cytochrome reductase. Cytochrome c then transfers this electron to the cytochrome oxidase complex, the final protein carrier in the mitochondrial electron-transport chain. In Gibberella zeae (strain ATCC MYA-4620 / CBS 123657 / FGSC 9075 / NRRL 31084 / PH-1) (Wheat head blight fungus), this protein is Cytochrome c (CYC1).